The following is a 116-amino-acid chain: uncharacterized protein (116 aa).

3 consecutive transmembrane segments (helical) span residues 8 to 28 (FMIYQVIGTVIGIAGIIVSFA), 39 to 59 (GLLLWLILWVSVILFSLNPPF), and 75 to 95 (FLLIIGILGAYYLLFRIYLMV).

It to M.jannaschii MJ1580.

The protein resides in the cell membrane. This is an uncharacterized protein from Methanothermobacter thermautotrophicus (strain ATCC 29096 / DSM 1053 / JCM 10044 / NBRC 100330 / Delta H) (Methanobacterium thermoautotrophicum).